Reading from the N-terminus, the 159-residue chain is Probable chemoreceptor glutamine deamidase CheD 2 (159 aa).

It belongs to the CheD family.

It carries out the reaction L-glutaminyl-[protein] + H2O = L-glutamyl-[protein] + NH4(+). Probably deamidates glutamine residues to glutamate on methyl-accepting chemotaxis receptors (MCPs), playing an important role in chemotaxis. This chain is Probable chemoreceptor glutamine deamidase CheD 2, found in Anaeromyxobacter dehalogenans (strain 2CP-C).